The sequence spans 159 residues: Transcriptional repressor NrdR (159 aa).

The segment at 3–34 (CPFCGSDNTSVKDSRAAEDDTAVRRRRVCESC) is a zinc-finger region. Residues 49-139 (IIVVKRDGKR…VYRDFKDPSD (91 aa)) form the ATP-cone domain.

This sequence belongs to the NrdR family. Zn(2+) serves as cofactor.

Functionally, negatively regulates transcription of bacterial ribonucleotide reductase nrd genes and operons by binding to NrdR-boxes. The polypeptide is Transcriptional repressor NrdR (Hyphomonas neptunium (strain ATCC 15444)).